The following is a 481-amino-acid chain: FBD-associated F-box protein At5g44490 (481 aa).

In terms of domain architecture, F-box spans 17–64 (DLMSKLTDALISQVLFYLPTKEAVSTSVLSSRWKSVWLLIPDLDLNSS). In terms of domain architecture, FBD spans 370 to 423 (EKSVSFSSVPQCLLSSLEFVEIKISRFGIISLGIGIARFFVENSVVLKKLVVHS).

The sequence is that of FBD-associated F-box protein At5g44490 from Arabidopsis thaliana (Mouse-ear cress).